Consider the following 504-residue polypeptide: Maturase K (504 aa).

It belongs to the intron maturase 2 family. MatK subfamily.

The protein localises to the plastid. It localises to the chloroplast. Usually encoded in the trnK tRNA gene intron. Probably assists in splicing its own and other chloroplast group II introns. This is Maturase K from Calyptranthes pallens (Spicewood).